Reading from the N-terminus, the 277-residue chain is 4-deoxy-L-threo-5-hexosulose-uronate ketol-isomerase (277 aa).

Zn(2+) contacts are provided by H195, H197, E202, and H244.

Belongs to the KduI family. Zn(2+) serves as cofactor.

It catalyses the reaction 5-dehydro-4-deoxy-D-glucuronate = 3-deoxy-D-glycero-2,5-hexodiulosonate. Its pathway is glycan metabolism; pectin degradation; 2-dehydro-3-deoxy-D-gluconate from pectin: step 4/5. Functionally, catalyzes the isomerization of 5-dehydro-4-deoxy-D-glucuronate to 3-deoxy-D-glycero-2,5-hexodiulosonate. This Oceanobacillus iheyensis (strain DSM 14371 / CIP 107618 / JCM 11309 / KCTC 3954 / HTE831) protein is 4-deoxy-L-threo-5-hexosulose-uronate ketol-isomerase.